Here is a 330-residue protein sequence, read N- to C-terminus: AH receptor-interacting protein (330 aa).

One can recognise a PPIase FKBP-type domain in the interval Gly31–Cys121. Ser43 bears the Phosphoserine mark. TPR repeat units follow at residues Val179–Leu212, Thr231–Asn264, and Val265–Leu298.

Interacts with RET in the pituitary gland; this interaction prevents the formation of the AIP-survivin complex.

It is found in the cytoplasm. In terms of biological role, may play a positive role in AHR-mediated (aromatic hydrocarbon receptor) signaling, possibly by influencing its receptivity for ligand and/or its nuclear targeting. This chain is AH receptor-interacting protein (Aip), found in Rattus norvegicus (Rat).